A 315-amino-acid polypeptide reads, in one-letter code: T cell receptor beta chain MC.7.G5 (315 aa).

The first 21 residues, 1–21 (MTIRLLCYMGFYFLGAGLMEA), serve as a signal peptide directing secretion. In terms of domain architecture, Ig-like V-type spans 22-114 (DIYQTPRYLV…TSQYLCASSE (93 aa)). Residues 22-114 (DIYQTPRYLV…TSQYLCASSE (93 aa)) are t cell receptor beta variable 25-1. A disulfide bond links C42 and C110. The tract at residues 46–50 (MGHDK) is CDR1. A CDR2 region spans residues 68–73 (SYGVNS). A glycan (N-linked (GlcNAc...) asparagine) is linked at N72. Positions 110 to 127 (CASSEARGLAEFTDTQYF) are CDR3. A t cell receptor beta joining 2-3 region spans residues 122–136 (TDTQYFGPGTRLTVL). The t cell receptor beta constant 2 stretch occupies residues 138–315 (DLKNVFPPEV…AMVKRKDSRG (178 aa)). In terms of domain architecture, Ig-like C1-type spans 145-254 (PEVAVFEPSE…WTQDRAKPVT (110 aa)). A disulfide bridge connects residues C167 and C232. N206 carries an N-linked (GlcNAc...) asparagine glycan. The tract at residues 267–281 (CGFTSESYQQGVLSA) is connecting peptide. Residues 282–304 (TILYEILLGKATLYAVLVSALVL) form a helical membrane-spanning segment. Residues 305-315 (MAMVKRKDSRG) are Cytoplasmic-facing.

As to quaternary structure, disulfide-linked heterodimer with TRAV38-2DV8*01J31*01C*01 alpha chain. The alpha-beta TR associates with the transmembrane signaling CD3 coreceptor proteins to form the TR-CD3 (TCR). The assembly of alpha-beta TR heterodimers with CD3 occurs in the endoplasmic reticulum where a single alpha-beta TR heterodimer associates with one CD3D-CD3E heterodimer, one CD3G-CD3E heterodimer and one CD247 homodimer forming a stable octameric structure. CD3D-CD3E and CD3G-CD3E heterodimers preferentially associate with TR alpha and TR beta chains (via TM domain), respectively. The association of the CD247 homodimer is the last step of TCR assembly in the endoplasmic reticulum and is required for transport to the cell surface. Expressed in MR1-restricted CD8-positive T cells.

It is found in the cell membrane. Functionally, the beta chain of TRAV38-2DV8*01J31*01C*01/TRBV25-1*01J2S3*01C2*01 alpha-beta T cell receptor (TR) clonotype that displays pan-cancer cell recognition via the invariant MR1 molecule. On CD8-positive T cell clone MC.7.G5, likely recognizes tumor-specific or -associated metabolite(s) essential for cancer cell survival, triggering killing of many cancer cell types including lung, melanoma, leukemia, colon, breast, prostate, bone and ovarian cancer cells. Mediates cancer cell cytotoxicity in an HLA-independent manner. Has no reactivity to healthy cells even stressed or infected by bacteria. Antigen recognition initiates TR-CD3 clustering on the cell surface and intracellular activation of LCK that phosphorylates the ITAM motifs of CD3G, CD3D, CD3E and CD247 enabling the recruitment of ZAP70. In turn, ZAP70 phosphorylates LAT, which recruits numerous signaling molecules to form the LAT signalosome. The LAT signalosome propagates signal branching to three major signaling pathways, the calcium, the mitogen-activated protein kinase (MAPK) kinase and the nuclear factor NF-kappa-B (NF-kB) pathways, leading to the mobilization of transcription factors that are critical for gene expression and essential for T cell differentiation into effector/memory T cells. This chain is T cell receptor beta chain MC.7.G5, found in Homo sapiens (Human).